The sequence spans 372 residues: Tyrosine--tRNA ligase 1 (372 aa).

L-tyrosine is bound by residues tyrosine 37, tyrosine 169, glutamine 173, aspartate 176, and glutamine 191. The 'KMSKS' region motif lies at 246–250 (KMSKS). Lysine 249 is a binding site for ATP.

Belongs to the class-I aminoacyl-tRNA synthetase family. TyrS type 4 subfamily. As to quaternary structure, homodimer.

Its subcellular location is the cytoplasm. The catalysed reaction is tRNA(Tyr) + L-tyrosine + ATP = L-tyrosyl-tRNA(Tyr) + AMP + diphosphate + H(+). Functionally, catalyzes the attachment of tyrosine to tRNA(Tyr) in a two-step reaction: tyrosine is first activated by ATP to form Tyr-AMP and then transferred to the acceptor end of tRNA(Tyr). In Pyrobaculum aerophilum (strain ATCC 51768 / DSM 7523 / JCM 9630 / CIP 104966 / NBRC 100827 / IM2), this protein is Tyrosine--tRNA ligase 1.